The sequence spans 593 residues: DEAD-box ATP-dependent RNA helicase 18 (593 aa).

The Q motif signature appears at 16–44; the sequence is FSDLEPPLSGDIIEALNQSDFEFCTPVQA. The region spanning 47-226 is the Helicase ATP-binding domain; the sequence is IPLLCSYKDV…KAGLRNPVRV (180 aa). 60 to 67 is an ATP binding site; it reads AATGSGKT. Residues 174–177 carry the DEAD box motif; sequence DEAD. A Helicase C-terminal domain is found at 264–411; sequence QLVDLLIKNS…ERKCSEDASD (148 aa). The span at 506-524 shows a compositional bias: basic and acidic residues; sequence QRQQNLQVRKEKRQEEKKE. The tract at residues 506–561 is disordered; it reads QRQQNLQVRKEKRQEEKKEKGKRKRVDASASNDPKKASRKLTGKQRQTIQTAEDEE.

It belongs to the DEAD box helicase family. DDX55/SPB4 subfamily.

It carries out the reaction ATP + H2O = ADP + phosphate + H(+). The chain is DEAD-box ATP-dependent RNA helicase 18 (RH18) from Arabidopsis thaliana (Mouse-ear cress).